A 328-amino-acid chain; its full sequence is 5,10-methylenetetrahydromethanopterin reductase (328 aa).

It belongs to the mer family.

Its subcellular location is the cytoplasm. It carries out the reaction 5-methyl-5,6,7,8-tetrahydromethanopterin + oxidized coenzyme F420-(gamma-L-Glu)(n) + H(+) = 5,10-methylenetetrahydromethanopterin + reduced coenzyme F420-(gamma-L-Glu)(n). It functions in the pathway one-carbon metabolism; methanogenesis from CO(2); methyl-coenzyme M from 5,10-methylene-5,6,7,8-tetrahydromethanopterin: step 1/2. In terms of biological role, catalyzes the reversible reduction of methylene-H(4)MPT to methyl-H(4)MPT. The chain is 5,10-methylenetetrahydromethanopterin reductase from Methanosarcina mazei (strain ATCC BAA-159 / DSM 3647 / Goe1 / Go1 / JCM 11833 / OCM 88) (Methanosarcina frisia).